Here is a 92-residue protein sequence, read N- to C-terminus: MIQRDIEYSGQYSKDVKLAQKRHKDMNKLKYLMTLLINNTLPLPAVYKDHPLQGSWKGYRDAHVEPDWILIYKLTDKLLRFERTGTHAALFG.

The active-site Proton donor is H87.

It belongs to the RelE toxin family. YafQ subfamily. Monomer in the absence of antitoxin. Forms a heterotetramer with antitoxin DinJ, with 2 YafQ-DinJ dimers associated via the N-terminus of the DinJ antitoxins (YafQ-(DinJ)2-YafQ). In this complex the toxin activity is inhibited. Binds the 70S ribosome via the 50S ribosomal subunit.

Its function is as follows. Toxic component of a type II toxin-antitoxin (TA) system. A sequence-specific mRNA endoribonuclease that inhibits translation elongation and induces bacterial stasis. Cleavage occurs between the second and third residue of the Lys codon followed by a G or A (5'AAA(G/A)3'), is reading-frame dependent and occurs within the 5' end of most mRNAs. Ribosome-binding confers the sequence specificity and reading frame-dependence. When overexpressed in liquid media YafQ partially inhibits protein synthesis, with a reduction in growth rate and colony growth rate. This effect is counteracted by coexpression with cognate antitoxin DinJ. YafQ and DinJ together bind their own promoter, and repress its expression. Functionally, cell death governed by the MazE-MazF and DinJ-YafQ TA systems seems to play a role in biofilm formation. This Escherichia coli (strain K12) protein is mRNA interferase toxin YafQ (yafQ).